Consider the following 89-residue polypeptide: Arminin 7519 (89 aa).

An N-terminal signal peptide occupies residues 1–18 (MRSTFAVLFLALIALTYS). A propeptide spanning residues 19 to 59 (KNYQDVKEEIKNEVENEILRDLGEDDDELDDNAQEAVNDAR) is cleaved from the precursor. Alanine 86 carries the post-translational modification Alanine amide.

The protein belongs to the arminin family. Expressed in entodermal epithelium along the body column.

The protein localises to the secreted. It is found in the target cell membrane. In terms of biological role, antimicrobial peptide with a broad-spectrum antimicrobial activity. Keeps its antibacterial activity under a wide range of salt concentrations that mimic physiological conditions of human blood, which is surprising, since Hydra is an obligate freshwater animal with nearly no salt tolerance. Does not affect red blood cells. This is Arminin 7519 from Hydra vulgaris (Hydra).